A 308-amino-acid chain; its full sequence is UDP-N-acetylenolpyruvoylglucosamine reductase (308 aa).

Residues 30-213 form the FAD-binding PCMH-type domain; sequence RVGGAAEWFI…KATTQSHLDH (184 aa). Arg-176 is a catalytic residue. Catalysis depends on Ser-227, which acts as the Proton donor. Glu-297 is an active-site residue.

It belongs to the MurB family. FAD is required as a cofactor.

The protein localises to the cytoplasm. The enzyme catalyses UDP-N-acetyl-alpha-D-muramate + NADP(+) = UDP-N-acetyl-3-O-(1-carboxyvinyl)-alpha-D-glucosamine + NADPH + H(+). Its pathway is cell wall biogenesis; peptidoglycan biosynthesis. In terms of biological role, cell wall formation. In Acaryochloris marina (strain MBIC 11017), this protein is UDP-N-acetylenolpyruvoylglucosamine reductase.